A 95-amino-acid chain; its full sequence is Nucleoid-associated protein MMOB0740 (95 aa).

This sequence belongs to the YbaB/EbfC family. Homodimer.

The protein localises to the cytoplasm. It localises to the nucleoid. Functionally, binds to DNA and alters its conformation. May be involved in regulation of gene expression, nucleoid organization and DNA protection. In Mycoplasma mobile (strain ATCC 43663 / 163K / NCTC 11711) (Mesomycoplasma mobile), this protein is Nucleoid-associated protein MMOB0740.